A 142-amino-acid chain; its full sequence is Matrix protein (142 aa).

Homooligomer. Forms homotetramers. Interacts with phosphoprotein P. Binds to ssRNA.

It localises to the virion. The protein localises to the host cytoplasm. The protein resides in the host cell membrane. Its subcellular location is the host nucleus. Functionally, plays a crucial role in virion assembly and budding. The polypeptide is Matrix protein (M) (Borna disease virus (strain V) (BDV)).